Consider the following 156-residue polypeptide: ATP synthase subunit b (156 aa).

The helical transmembrane segment at 12–32 threads the bilayer; that stretch reads IAFAIFVWFCVKYVWPPITAA.

This sequence belongs to the ATPase B chain family. As to quaternary structure, F-type ATPases have 2 components, F(1) - the catalytic core - and F(0) - the membrane proton channel. F(1) has five subunits: alpha(3), beta(3), gamma(1), delta(1), epsilon(1). F(0) has three main subunits: a(1), b(2) and c(10-14). The alpha and beta chains form an alternating ring which encloses part of the gamma chain. F(1) is attached to F(0) by a central stalk formed by the gamma and epsilon chains, while a peripheral stalk is formed by the delta and b chains.

The protein localises to the cell inner membrane. F(1)F(0) ATP synthase produces ATP from ADP in the presence of a proton or sodium gradient. F-type ATPases consist of two structural domains, F(1) containing the extramembraneous catalytic core and F(0) containing the membrane proton channel, linked together by a central stalk and a peripheral stalk. During catalysis, ATP synthesis in the catalytic domain of F(1) is coupled via a rotary mechanism of the central stalk subunits to proton translocation. In terms of biological role, component of the F(0) channel, it forms part of the peripheral stalk, linking F(1) to F(0). The sequence is that of ATP synthase subunit b from Marinobacter nauticus (strain ATCC 700491 / DSM 11845 / VT8) (Marinobacter aquaeolei).